A 538-amino-acid chain; its full sequence is Chaperonin GroEL (538 aa).

ATP is bound by residues 30-33 (TLGP), 87-91 (DGTTT), Gly415, 479-481 (DAA), and Asp495.

This sequence belongs to the chaperonin (HSP60) family. Forms a cylinder of 14 subunits composed of two heptameric rings stacked back-to-back. Interacts with the co-chaperonin GroES.

It localises to the cytoplasm. It catalyses the reaction ATP + H2O + a folded polypeptide = ADP + phosphate + an unfolded polypeptide.. Together with its co-chaperonin GroES, plays an essential role in assisting protein folding. The GroEL-GroES system forms a nano-cage that allows encapsulation of the non-native substrate proteins and provides a physical environment optimized to promote and accelerate protein folding. In Dictyoglomus turgidum (strain DSM 6724 / Z-1310), this protein is Chaperonin GroEL.